Here is a 156-residue protein sequence, read N- to C-terminus: Small ribosomal subunit protein uS7 (156 aa).

This sequence belongs to the universal ribosomal protein uS7 family. As to quaternary structure, part of the 30S ribosomal subunit. Contacts proteins S9 and S11.

One of the primary rRNA binding proteins, it binds directly to 16S rRNA where it nucleates assembly of the head domain of the 30S subunit. Is located at the subunit interface close to the decoding center, probably blocks exit of the E-site tRNA. This is Small ribosomal subunit protein uS7 from Acholeplasma laidlawii (strain PG-8A).